The chain runs to 338 residues: RNA 3'-terminal phosphate cyclase (338 aa).

ATP is bound by residues Q103 and 283 to 287 (YLADQ). H308 (tele-AMP-histidine intermediate) is an active-site residue.

It belongs to the RNA 3'-terminal cyclase family. Type 1 subfamily.

It is found in the cytoplasm. The enzyme catalyses a 3'-end 3'-phospho-ribonucleotide-RNA + ATP = a 3'-end 2',3'-cyclophospho-ribonucleotide-RNA + AMP + diphosphate. In terms of biological role, catalyzes the conversion of 3'-phosphate to a 2',3'-cyclic phosphodiester at the end of RNA. The mechanism of action of the enzyme occurs in 3 steps: (A) adenylation of the enzyme by ATP; (B) transfer of adenylate to an RNA-N3'P to produce RNA-N3'PP5'A; (C) and attack of the adjacent 2'-hydroxyl on the 3'-phosphorus in the diester linkage to produce the cyclic end product. The biological role of this enzyme is unknown but it is likely to function in some aspects of cellular RNA processing. The protein is RNA 3'-terminal phosphate cyclase of Escherichia coli O8 (strain IAI1).